The following is a 438-amino-acid chain: Lipoyl synthase, mitochondrial (438 aa).

The transit peptide at 1–31 (MAASARGLRTLQSAHSSTTVPRLQLAVSRCY) directs the protein to the mitochondrion. Residues 34–57 (TTSPDPPITNSSNSSNSSNSTPTP) show a composition bias toward low complexity. The segment at 34-58 (TTSPDPPITNSSNSSNSSNSTPTPK) is disordered. The [4Fe-4S] cluster site is built by Cys-148, Cys-153, Cys-159, Cys-179, Cys-183, Cys-186, and Ser-394. The region spanning 162 to 383 (GSSKSAATAT…KERALEMGFL (222 aa)) is the Radical SAM core domain.

It belongs to the radical SAM superfamily. Lipoyl synthase family. Requires [4Fe-4S] cluster as cofactor.

Its subcellular location is the mitochondrion. The catalysed reaction is [[Fe-S] cluster scaffold protein carrying a second [4Fe-4S](2+) cluster] + N(6)-octanoyl-L-lysyl-[protein] + 2 oxidized [2Fe-2S]-[ferredoxin] + 2 S-adenosyl-L-methionine + 4 H(+) = [[Fe-S] cluster scaffold protein] + N(6)-[(R)-dihydrolipoyl]-L-lysyl-[protein] + 4 Fe(3+) + 2 hydrogen sulfide + 2 5'-deoxyadenosine + 2 L-methionine + 2 reduced [2Fe-2S]-[ferredoxin]. Its pathway is protein modification; protein lipoylation via endogenous pathway; protein N(6)-(lipoyl)lysine from octanoyl-[acyl-carrier-protein]: step 2/2. In terms of biological role, catalyzes the radical-mediated insertion of two sulfur atoms into the C-6 and C-8 positions of the octanoyl moiety bound to the lipoyl domains of lipoate-dependent enzymes, thereby converting the octanoylated domains into lipoylated derivatives. The sequence is that of Lipoyl synthase, mitochondrial from Paracoccidioides brasiliensis (strain Pb18).